A 506-amino-acid polypeptide reads, in one-letter code: Lysine--tRNA ligase (506 aa).

2 residues coordinate Mg(2+): Glu416 and Glu423.

This sequence belongs to the class-II aminoacyl-tRNA synthetase family. As to quaternary structure, homodimer. It depends on Mg(2+) as a cofactor.

Its subcellular location is the cytoplasm. It carries out the reaction tRNA(Lys) + L-lysine + ATP = L-lysyl-tRNA(Lys) + AMP + diphosphate. In Xylella fastidiosa (strain 9a5c), this protein is Lysine--tRNA ligase (lysS).